A 379-amino-acid chain; its full sequence is tRNA-specific 2-thiouridylase MnmA (379 aa).

ATP is bound by residues 23–30 (AMSGGVDS) and Leu49. The Nucleophile role is filled by Cys117. A disulfide bridge connects residues Cys117 and Cys214. Gly141 contributes to the ATP binding site. An interaction with tRNA region spans residues 163–165 (RDQ). Cys214 functions as the Cysteine persulfide intermediate in the catalytic mechanism.

The protein belongs to the MnmA/TRMU family.

The protein resides in the cytoplasm. The enzyme catalyses S-sulfanyl-L-cysteinyl-[protein] + uridine(34) in tRNA + AH2 + ATP = 2-thiouridine(34) in tRNA + L-cysteinyl-[protein] + A + AMP + diphosphate + H(+). Functionally, catalyzes the 2-thiolation of uridine at the wobble position (U34) of tRNA, leading to the formation of s(2)U34. This is tRNA-specific 2-thiouridylase MnmA from Cereibacter sphaeroides (strain ATCC 17023 / DSM 158 / JCM 6121 / CCUG 31486 / LMG 2827 / NBRC 12203 / NCIMB 8253 / ATH 2.4.1.) (Rhodobacter sphaeroides).